The following is a 227-amino-acid chain: Cytochrome c oxidase subunit 2 (227 aa).

Residues 1–14 (MAHPMQLGFQDAAS) lie on the Mitochondrial intermembrane side of the membrane. The helical transmembrane segment at 15–45 (PIMEELLYFHDHTLMIVFMISSLVLYIISLM) threads the bilayer. Over 46-59 (LSTELTHTSTMDAQ) the chain is Mitochondrial matrix. Residues 60-87 (EVETVWTILPAVILILIALPSLRILYMM) traverse the membrane as a helical segment. At 88–227 (DEINTPSMTL…YFEEWLLKSL (140 aa)) the chain is on the mitochondrial intermembrane side. Positions 161, 196, 198, 200, 204, and 207 each coordinate Cu cation. A Mg(2+)-binding site is contributed by Glu-198. Phosphotyrosine is present on Tyr-218.

Belongs to the cytochrome c oxidase subunit 2 family. Component of the cytochrome c oxidase (complex IV, CIV), a multisubunit enzyme composed of 14 subunits. The complex is composed of a catalytic core of 3 subunits MT-CO1, MT-CO2 and MT-CO3, encoded in the mitochondrial DNA, and 11 supernumerary subunits COX4I, COX5A, COX5B, COX6A, COX6B, COX6C, COX7A, COX7B, COX7C, COX8 and NDUFA4, which are encoded in the nuclear genome. The complex exists as a monomer or a dimer and forms supercomplexes (SCs) in the inner mitochondrial membrane with NADH-ubiquinone oxidoreductase (complex I, CI) and ubiquinol-cytochrome c oxidoreductase (cytochrome b-c1 complex, complex III, CIII), resulting in different assemblies (supercomplex SCI(1)III(2)IV(1) and megacomplex MCI(2)III(2)IV(2)). Found in a complex with TMEM177, COA6, COX18, COX20, SCO1 and SCO2. Interacts with TMEM177 in a COX20-dependent manner. Interacts with COX20. Interacts with COX16. Requires Cu cation as cofactor.

It is found in the mitochondrion inner membrane. The catalysed reaction is 4 Fe(II)-[cytochrome c] + O2 + 8 H(+)(in) = 4 Fe(III)-[cytochrome c] + 2 H2O + 4 H(+)(out). In terms of biological role, component of the cytochrome c oxidase, the last enzyme in the mitochondrial electron transport chain which drives oxidative phosphorylation. The respiratory chain contains 3 multisubunit complexes succinate dehydrogenase (complex II, CII), ubiquinol-cytochrome c oxidoreductase (cytochrome b-c1 complex, complex III, CIII) and cytochrome c oxidase (complex IV, CIV), that cooperate to transfer electrons derived from NADH and succinate to molecular oxygen, creating an electrochemical gradient over the inner membrane that drives transmembrane transport and the ATP synthase. Cytochrome c oxidase is the component of the respiratory chain that catalyzes the reduction of oxygen to water. Electrons originating from reduced cytochrome c in the intermembrane space (IMS) are transferred via the dinuclear copper A center (CU(A)) of subunit 2 and heme A of subunit 1 to the active site in subunit 1, a binuclear center (BNC) formed by heme A3 and copper B (CU(B)). The BNC reduces molecular oxygen to 2 water molecules using 4 electrons from cytochrome c in the IMS and 4 protons from the mitochondrial matrix. The protein is Cytochrome c oxidase subunit 2 (MT-CO2) of Nycticebus coucang (Slow loris).